The chain runs to 258 residues: MRRLINHIVNHDLFRWSVMTAMIFYRYSETCMEVTVRVGDPVTLGSGHGYHPGQKVHWYNQSCVGISNGENTHPICTYDPPKPGRRKTMKTTPLPSPLLYECHNSTLSILHVNVSDPKNYCRRKCPPNGNCEFPTCFTLSLISRTTTTRKPGQKTTLSRLKTTPNKHTQHKRSTRRTSPRDYNVTGLPKGFADSFTGNVEAHRAKDAAHSAWILIVIIIIIVVILFFFKIPQRLREKWDTRGYLYKGTDGLPTTDYLS.

3 N-linked (GlcNAc...) asparagine; by host glycosylation sites follow: N60, N104, and N113. A compositionally biased stretch (low complexity) spans 147–156; that stretch reads TTRKPGQKTT. The interval 147–183 is disordered; it reads TTRKPGQKTTLSRLKTTPNKHTQHKRSTRRTSPRDYN. Positions 157–166 are enriched in polar residues; that stretch reads LSRLKTTPNK. Residues 167-177 show a composition bias toward basic residues; the sequence is HTQHKRSTRRT. N183 carries N-linked (GlcNAc...) asparagine; by host glycosylation. The helical transmembrane segment at 208–228 threads the bilayer; it reads AHSAWILIVIIIIIVVILFFF.

The protein belongs to the RL11 family.

It localises to the membrane. This is an uncharacterized protein from Human cytomegalovirus (strain AD169) (HHV-5).